The sequence spans 224 residues: BOS complex subunit TMEM147 (224 aa).

A helical membrane pass occupies residues 1-21; that stretch reads MTLFHFGNCFALAYFPYFITY. The Cytoplasmic segment spans residues 22-34; it reads KCSGLSEYNAFWK. A helical transmembrane segment spans residues 35-58; the sequence is CVQAGVTYLFVQLCKMLFLATFFP. Topologically, residues 59 to 66 are lumenal; that stretch reads TWEGGIYD. Residues 67–88 traverse the membrane as a helical segment; sequence FIGEFMKASVDVADLIGLNLVM. At 89 to 98 the chain is on the cytoplasmic side; the sequence is SRNAGKGEYK. The chain crosses the membrane as a helical span at residues 99–124; the sequence is IMVAALGWATAELIMSRCIPLWVGAR. Residues 125 to 129 lie on the Lumenal side of the membrane; it reads GIEFD. The chain crosses the membrane as a helical span at residues 130–155; the sequence is WKYIQMSIDSNISLVHYIVASAQVWM. Over 156 to 164 the chain is Cytoplasmic; it reads ITRYDLYHT. Residues 165–187 form a helical membrane-spanning segment; it reads FRPAVLLLMFLSVYKAFVMETFV. Residues 188 to 194 lie on the Lumenal side of the membrane; it reads HLCSLGS. The chain crosses the membrane as a helical span at residues 195–216; that stretch reads WAALLARAVVTGLLALSTLALY. At 217 to 224 the chain is on the cytoplasmic side; the sequence is VAVVNVHS.

The protein belongs to the TMEM147 family. In terms of assembly, component of the back of Sec61 (BOS) complex, composed of NCLN/Nicalin, NOMO (NOMO1, NOMO2 or NOMO3) and TMEM147. The BOS complex is part of the multi-pass translocon (MPT) complex, composed of three subcomplexes, the GEL complex (composed of RAB5IF/OPTI and TMCO1), the BOS complex (composed of NCLN/Nicalin, NOMO and TMEM147) and the PAT complex (composed of WDR83OS/Asterix and CCDC47). The MPT complex associates with the SEC61 complex. Interacts with CHRM3, CHRM1 and AVPR2. Interacts with LBR; promoting LBR localization to the nucleus inner membrane. Interacts with DHCR7.

It is found in the endoplasmic reticulum membrane. It localises to the nucleus membrane. The protein resides in the cell membrane. Component of the multi-pass translocon (MPT) complex that mediates insertion of multi-pass membrane proteins into the lipid bilayer of membranes. The MPT complex takes over after the SEC61 complex: following membrane insertion of the first few transmembrane segments of proteins by the SEC61 complex, the MPT complex occludes the lateral gate of the SEC61 complex to promote insertion of subsequent transmembrane regions. Also acts as a negative regulator of CHRM3 function, most likely by interfering with its trafficking to the cell membrane. Negatively regulates CHRM3-mediated calcium mobilization and activation of RPS6KA1/p90RSK activity. Regulates LBR localization to the nucleus inner membrane. This is BOS complex subunit TMEM147 from Homo sapiens (Human).